The following is a 278-amino-acid chain: Tryptophan synthase alpha chain (278 aa).

Active-site proton acceptor residues include Glu50 and Asp61.

This sequence belongs to the TrpA family. Tetramer of two alpha and two beta chains.

The enzyme catalyses (1S,2R)-1-C-(indol-3-yl)glycerol 3-phosphate + L-serine = D-glyceraldehyde 3-phosphate + L-tryptophan + H2O. The protein operates within amino-acid biosynthesis; L-tryptophan biosynthesis; L-tryptophan from chorismate: step 5/5. Its function is as follows. The alpha subunit is responsible for the aldol cleavage of indoleglycerol phosphate to indole and glyceraldehyde 3-phosphate. This is Tryptophan synthase alpha chain from Methylobacterium nodulans (strain LMG 21967 / CNCM I-2342 / ORS 2060).